The primary structure comprises 662 residues: Acyl-coenzyme A oxidase acox-1.4 (662 aa).

Residues Tyr-148 to Thr-151, Gly-156 to Thr-157, and Gly-190 contribute to the FAD site. Substrate contacts are provided by residues Lys-284–His-287 and Arg-294. FAD-binding positions include Arg-319 and Gln-339–Arg-342. 4 residues coordinate ATP: His-341, Ser-391, His-395, and Gln-403. Residue Gly-410 participates in FAD binding. Position 432 to 433 (Tyr-432 to Glu-433) interacts with substrate. Catalysis depends on Glu-433, which acts as the Proton acceptor. Glu-435 contributes to the FAD binding site. Residues Arg-526–Arg-529 and Tyr-574 each bind ATP. Residues Ala-660–Leu-662 carry the Microbody targeting signal motif.

The protein belongs to the acyl-CoA oxidase family. Homodimer. It depends on FAD as a cofactor.

It localises to the peroxisome. The enzyme catalyses asc-C9-CoA + O2 = asc-DeltaC9-CoA + H2O2. Its pathway is lipid metabolism; peroxisomal fatty acid beta-oxidation. Activated by ATP. ATP binding leads to a conformational change that promotes FAD cofactor binding and enzyme activity. ATP binding likely occurs during acox-1.4 folding and/or dimer formation. Involved in the first step of peroxisomal beta-oxidation by catalyzing the desaturation of fatty acid-derived side chains of ascaroside pheromones, which regulates development and behavior. Specifically, shortens ascarosides with a 9-carbon side chain (asc-C9) and, in association with acox-1.1, may contribute to the shortening of ascarosides with a 11-carbon side chain (asc-C11). May contribute to the production of indol-3-carbonyl(IC)-ascarosides in association with acox-1.1 and acox-3. The chain is Acyl-coenzyme A oxidase acox-1.4 from Caenorhabditis elegans.